Reading from the N-terminus, the 128-residue chain is Nucleoside diphosphate kinase B (128 aa).

Residue methionine 1 is modified to N-acetylmethionine. The ATP site is built by lysine 9, phenylalanine 39, threonine 70, arginine 81, and asparagine 91. The active-site Pros-phosphohistidine intermediate is the histidine 94.

The protein belongs to the NDK family. Requires Mg(2+) as cofactor.

The protein localises to the cytoplasm. It is found in the nucleus. Its subcellular location is the cell projection. It localises to the lamellipodium. The protein resides in the ruffle. It carries out the reaction a 2'-deoxyribonucleoside 5'-diphosphate + ATP = a 2'-deoxyribonucleoside 5'-triphosphate + ADP. The catalysed reaction is a ribonucleoside 5'-diphosphate + ATP = a ribonucleoside 5'-triphosphate + ADP. Functionally, major role in the synthesis of nucleoside triphosphates other than ATP. The protein is Nucleoside diphosphate kinase B (nme2) of Merluccius bilinearis (Silver hake).